The primary structure comprises 303 residues: Glycine--tRNA ligase alpha subunit (303 aa).

This sequence belongs to the class-II aminoacyl-tRNA synthetase family. In terms of assembly, tetramer of two alpha and two beta subunits.

The protein localises to the cytoplasm. It carries out the reaction tRNA(Gly) + glycine + ATP = glycyl-tRNA(Gly) + AMP + diphosphate. This is Glycine--tRNA ligase alpha subunit from Salmonella paratyphi A (strain ATCC 9150 / SARB42).